Here is a 482-residue protein sequence, read N- to C-terminus: 23S rRNA (uracil(1939)-C(5))-methyltransferase RlmD (482 aa).

Residues 1–33 form a disordered region; the sequence is MANLFKQSRAKQKNKTTPSQTQTSTKGSARANA. Residues 15 to 28 show a composition bias toward low complexity; the sequence is KTTPSQTQTSTKGS. Positions 51 to 108 constitute a TRAM domain; the sequence is TAQDANNNAITIQELDWMGQGVARGATMYFVEGALPGETCDIEVVSSKKKVVSAKTIS. [4Fe-4S] cluster is bound by residues Cys-121, Cys-127, Cys-130, and Cys-208. Gln-313, Phe-342, Asn-347, Glu-363, Asp-390, and Asp-411 together coordinate S-adenosyl-L-methionine. Cys-437 (nucleophile) is an active-site residue.

It belongs to the class I-like SAM-binding methyltransferase superfamily. RNA M5U methyltransferase family. RlmD subfamily.

The enzyme catalyses uridine(1939) in 23S rRNA + S-adenosyl-L-methionine = 5-methyluridine(1939) in 23S rRNA + S-adenosyl-L-homocysteine + H(+). Catalyzes the formation of 5-methyl-uridine at position 1939 (m5U1939) in 23S rRNA. This chain is 23S rRNA (uracil(1939)-C(5))-methyltransferase RlmD, found in Alteromonas mediterranea (strain DSM 17117 / CIP 110805 / LMG 28347 / Deep ecotype).